The following is a 726-amino-acid chain: Catalase-peroxidase (726 aa).

Residues 1–33 (MSTTDDTHNTLSTGKCPFHQGGHDRSAGAGTAS) are disordered. A cross-link (tryptophyl-tyrosyl-methioninium (Trp-Tyr) (with M-252)) is located at residues 105-226 (WHGAGTYRSI…LGATEMGLIY (122 aa)). Catalysis depends on His-106, which acts as the Proton acceptor. The tryptophyl-tyrosyl-methioninium (Tyr-Met) (with W-105) cross-link spans 226–252 (YVNPEGPDHSGEPLSAAAAIRATFGNM). Position 267 (His-267) interacts with heme b.

It belongs to the peroxidase family. Peroxidase/catalase subfamily. Homodimer or homotetramer. It depends on heme b as a cofactor. Formation of the three residue Trp-Tyr-Met cross-link is important for the catalase, but not the peroxidase activity of the enzyme.

It catalyses the reaction H2O2 + AH2 = A + 2 H2O. The catalysed reaction is 2 H2O2 = O2 + 2 H2O. Bifunctional enzyme with both catalase and broad-spectrum peroxidase activity. In Salmonella heidelberg (strain SL476), this protein is Catalase-peroxidase.